The sequence spans 426 residues: Enolase (426 aa).

Position 165 (Gln-165) interacts with (2R)-2-phosphoglycerate. The active-site Proton donor is Glu-207. The Mg(2+) site is built by Asp-244, Glu-285, and Asp-312. Residues Lys-337, Arg-366, Ser-367, and Lys-388 each contribute to the (2R)-2-phosphoglycerate site. Residue Lys-337 is the Proton acceptor of the active site.

It belongs to the enolase family. Mg(2+) serves as cofactor.

The protein localises to the cytoplasm. It localises to the secreted. It is found in the cell surface. It carries out the reaction (2R)-2-phosphoglycerate = phosphoenolpyruvate + H2O. The protein operates within carbohydrate degradation; glycolysis; pyruvate from D-glyceraldehyde 3-phosphate: step 4/5. Functionally, catalyzes the reversible conversion of 2-phosphoglycerate (2-PG) into phosphoenolpyruvate (PEP). It is essential for the degradation of carbohydrates via glycolysis. This is Enolase from Cyanothece sp. (strain PCC 7425 / ATCC 29141).